A 119-amino-acid polypeptide reads, in one-letter code: Ribonuclease P protein component (119 aa).

Belongs to the RnpA family. As to quaternary structure, consists of a catalytic RNA component (M1 or rnpB) and a protein subunit.

The enzyme catalyses Endonucleolytic cleavage of RNA, removing 5'-extranucleotides from tRNA precursor.. Functionally, RNaseP catalyzes the removal of the 5'-leader sequence from pre-tRNA to produce the mature 5'-terminus. It can also cleave other RNA substrates such as 4.5S RNA. The protein component plays an auxiliary but essential role in vivo by binding to the 5'-leader sequence and broadening the substrate specificity of the ribozyme. This Shewanella woodyi (strain ATCC 51908 / MS32) protein is Ribonuclease P protein component.